Here is a 526-residue protein sequence, read N- to C-terminus: Thioredoxin reductase 2, mitochondrial (526 aa).

The transit peptide at 1–36 (MAAIVAALRGSSGRFRPQTRVLTRGTRGAAGAASAA) directs the protein to the mitochondrion. 43–72 (DLLVIGGGSGGLACAKEAAQLGRKVAVADY) is an FAD binding site. Residue K81 is modified to N6-succinyllysine. The cysteines at positions 88 and 93 are disulfide-linked. 2 positions are modified to N6-succinyllysine: K177 and K331. The Proton acceptor role is filled by H499. The segment at residues 524–525 (CU) is a cross-link (cysteinyl-selenocysteine (Cys-Sec)). A non-standard amino acid (selenocysteine) is located at residue U525.

This sequence belongs to the class-I pyridine nucleotide-disulfide oxidoreductase family. As to quaternary structure, homodimer. It depends on FAD as a cofactor. In terms of tissue distribution, expressed in liver, kidney, adrenal gland and heart.

The protein localises to the mitochondrion. The enzyme catalyses [thioredoxin]-dithiol + NADP(+) = [thioredoxin]-disulfide + NADPH + H(+). Its function is as follows. Involved in the control of reactive oxygen species levels and the regulation of mitochondrial redox homeostasis. Maintains mitochondrial thioredoxin in a reduced state. May play a role in redox-regulated cell signaling. The protein is Thioredoxin reductase 2, mitochondrial (Txnrd2) of Rattus norvegicus (Rat).